Consider the following 187-residue polypeptide: Peptidyl-tRNA hydrolase (187 aa).

Y15 lines the tRNA pocket. H20 acts as the Proton acceptor in catalysis. Residues Y64, N66, and N112 each coordinate tRNA.

This sequence belongs to the PTH family. Monomer.

It localises to the cytoplasm. It carries out the reaction an N-acyl-L-alpha-aminoacyl-tRNA + H2O = an N-acyl-L-amino acid + a tRNA + H(+). Its function is as follows. Hydrolyzes ribosome-free peptidyl-tRNAs (with 1 or more amino acids incorporated), which drop off the ribosome during protein synthesis, or as a result of ribosome stalling. Functionally, catalyzes the release of premature peptidyl moieties from peptidyl-tRNA molecules trapped in stalled 50S ribosomal subunits, and thus maintains levels of free tRNAs and 50S ribosomes. This is Peptidyl-tRNA hydrolase from Phocaeicola vulgatus (strain ATCC 8482 / DSM 1447 / JCM 5826 / CCUG 4940 / NBRC 14291 / NCTC 11154) (Bacteroides vulgatus).